We begin with the raw amino-acid sequence, 430 residues long: Leucoanthocyanidin dioxygenase (430 aa).

The Fe2OG dioxygenase domain occupies 212-311 (LLLQMKINYY…RFSWAIFCEP (100 aa)). The Fe cation site is built by H236, D238, and H292. Basic and acidic residues-rich tracts occupy residues 376-407 (KKDN…KEDG) and 415-430 (KVFK…EESK). Residues 376 to 430 (KKDNQDAVAENKDIKEDEQCGPAEHKDIKEDGQGAAAENKVFKENNQDVAAEESK) are disordered.

It belongs to the iron/ascorbate-dependent oxidoreductase family. It depends on Fe cation as a cofactor. Requires L-ascorbate as cofactor. In terms of tissue distribution, predominantly expressed in corollas and at lower levels in anthers.

It catalyses the reaction a (2R,3S,4S)-leucoanthocyanidin + 2-oxoglutarate + O2 = a 4-H-anthocyanidin with a 3-hydroxy group + succinate + CO2 + 2 H2O. Its pathway is pigment biosynthesis; anthocyanin biosynthesis. Functionally, oxidation of leucoanthocyanidins into anthocyanidins. The protein is Leucoanthocyanidin dioxygenase (ANT17) of Petunia hybrida (Petunia).